The primary structure comprises 701 residues: Elongation factor G (701 aa).

The 283-residue stretch at 8-290 (SRYRNIGISA…AVIEYLPAPT (283 aa)) folds into the tr-type G domain. GTP is bound by residues 17–24 (AHIDAGKT), 88–92 (DTPGH), and 142–145 (NKMD).

This sequence belongs to the TRAFAC class translation factor GTPase superfamily. Classic translation factor GTPase family. EF-G/EF-2 subfamily.

Its subcellular location is the cytoplasm. In terms of biological role, catalyzes the GTP-dependent ribosomal translocation step during translation elongation. During this step, the ribosome changes from the pre-translocational (PRE) to the post-translocational (POST) state as the newly formed A-site-bound peptidyl-tRNA and P-site-bound deacylated tRNA move to the P and E sites, respectively. Catalyzes the coordinated movement of the two tRNA molecules, the mRNA and conformational changes in the ribosome. The polypeptide is Elongation factor G (Actinobacillus pleuropneumoniae serotype 5b (strain L20)).